The chain runs to 147 residues: MINDDLIVLLEPIIKNMGYELWGCEYLSQGKHSLLRIYIDKPDGIGIDDCQEVSKQVSAMLDVEDPIPGHYSLEISSPGIPRPLFSIWQYQRYLGYEIHVKTFKPVNGKRKLSGIIVSASEDTIVLDINNEHQEILLSNIVKANLTV.

Belongs to the RimP family.

The protein localises to the cytoplasm. Functionally, required for maturation of 30S ribosomal subunits. This is Ribosome maturation factor RimP from Legionella pneumophila (strain Paris).